The sequence spans 551 residues: GMP synthase [glutamine-hydrolyzing] (551 aa).

The 194-residue stretch at 40 to 233 (KILIVDFGSQ…VRKIAGLTGD (194 aa)) folds into the Glutamine amidotransferase type-1 domain. The Nucleophile role is filled by Cys117. Active-site residues include His207 and Glu209. The 193-residue stretch at 234–426 (WTMRAFREEE…LGLPEIFVGR (193 aa)) folds into the GMPS ATP-PPase domain. 261–267 (SGGVDSA) is a binding site for ATP.

Homodimer.

It catalyses the reaction XMP + L-glutamine + ATP + H2O = GMP + L-glutamate + AMP + diphosphate + 2 H(+). The protein operates within purine metabolism; GMP biosynthesis; GMP from XMP (L-Gln route): step 1/1. In terms of biological role, catalyzes the synthesis of GMP from XMP. In Bradyrhizobium diazoefficiens (strain JCM 10833 / BCRC 13528 / IAM 13628 / NBRC 14792 / USDA 110), this protein is GMP synthase [glutamine-hydrolyzing].